The sequence spans 396 residues: Probable sugar efflux transporter (396 aa).

The next 12 membrane-spanning stretches (helical) occupy residues 15-35, 50-70, 81-101, 103-123, 136-156, 170-190, 209-229, 246-266, 275-295, 299-319, 333-353, and 364-384; these read VVTL…PVGL, VGIM…PFML, LICL…SWSF, VLVI…SITA, AQAL…GLPL, FFAI…LLPL, PALM…YTAY, FATA…VIFG, TLVS…LPAA, IHLG…GLGM, VAMA…ALVG, and MIGY…IIIF.

This sequence belongs to the major facilitator superfamily. SotB (TC 2.A.1.2) family.

The protein localises to the cell inner membrane. Its function is as follows. Involved in the efflux of sugars. The physiological role may be the reduction of the intracellular concentration of toxic sugars or sugar metabolites. This is Probable sugar efflux transporter from Escherichia coli (strain SMS-3-5 / SECEC).